The sequence spans 196 residues: Large ribosomal subunit protein uL10 (196 aa).

A disordered region spans residues 167–196 (EKKAAEGPAEAPQPATEPPAEAPEAPADAE).

This sequence belongs to the universal ribosomal protein uL10 family. As to quaternary structure, part of the ribosomal stalk of the 50S ribosomal subunit. The N-terminus interacts with L11 and the large rRNA to form the base of the stalk. The C-terminus forms an elongated spine to which L12 dimers bind in a sequential fashion forming a multimeric L10(L12)X complex.

In terms of biological role, forms part of the ribosomal stalk, playing a central role in the interaction of the ribosome with GTP-bound translation factors. The chain is Large ribosomal subunit protein uL10 from Mycolicibacterium paratuberculosis (strain ATCC BAA-968 / K-10) (Mycobacterium paratuberculosis).